Consider the following 37-residue polypeptide: Large ribosomal subunit protein bL36c (37 aa).

It belongs to the bacterial ribosomal protein bL36 family.

Its subcellular location is the plastid. The protein resides in the chloroplast. The chain is Large ribosomal subunit protein bL36c from Phaseolus angularis (Azuki bean).